A 240-amino-acid chain; its full sequence is Uridylate kinase (240 aa).

12–15 (KLSG) lines the ATP pocket. Positions 20-25 (GEQGNG) are involved in allosteric activation by GTP. UMP is bound at residue Gly54. Gly55 and Arg59 together coordinate ATP. UMP-binding positions include Asp74 and 135–142 (TGNPYFST). ATP is bound by residues Asn163, Tyr169, and Asp172.

Belongs to the UMP kinase family. As to quaternary structure, homohexamer.

It is found in the cytoplasm. The catalysed reaction is UMP + ATP = UDP + ADP. Its pathway is pyrimidine metabolism; CTP biosynthesis via de novo pathway; UDP from UMP (UMPK route): step 1/1. Allosterically activated by GTP. Inhibited by UTP. In terms of biological role, catalyzes the reversible phosphorylation of UMP to UDP. This is Uridylate kinase from Bacillus velezensis (strain DSM 23117 / BGSC 10A6 / LMG 26770 / FZB42) (Bacillus amyloliquefaciens subsp. plantarum).